Here is a 259-residue protein sequence, read N- to C-terminus: Ribonuclease HII (259 aa).

Residues 1–26 (MLSTPPKLPSAHGPVHFPRRSGTGMN) are disordered. In terms of domain architecture, RNase H type-2 spans 55 to 243 (APVAGADEAG…VRAQQLVLFE (189 aa)). D61, E62, and D152 together coordinate a divalent metal cation.

This sequence belongs to the RNase HII family. Mn(2+) is required as a cofactor. The cofactor is Mg(2+).

It localises to the cytoplasm. It carries out the reaction Endonucleolytic cleavage to 5'-phosphomonoester.. In terms of biological role, endonuclease that specifically degrades the RNA of RNA-DNA hybrids. This is Ribonuclease HII from Azorhizobium caulinodans (strain ATCC 43989 / DSM 5975 / JCM 20966 / LMG 6465 / NBRC 14845 / NCIMB 13405 / ORS 571).